The primary structure comprises 187 residues: UPF0301 protein YqgE (187 aa).

Belongs to the UPF0301 (AlgH) family.

The polypeptide is UPF0301 protein YqgE (Salmonella choleraesuis (strain SC-B67)).